We begin with the raw amino-acid sequence, 211 residues long: 3-demethoxyubiquinol 3-hydroxylase (211 aa).

Fe cation-binding residues include Glu-60, Glu-90, His-93, Glu-142, Glu-174, and His-177.

This sequence belongs to the COQ7 family. The cofactor is Fe cation.

Its subcellular location is the cell membrane. The catalysed reaction is a 5-methoxy-2-methyl-3-(all-trans-polyprenyl)benzene-1,4-diol + AH2 + O2 = a 3-demethylubiquinol + A + H2O. It functions in the pathway cofactor biosynthesis; ubiquinone biosynthesis. In terms of biological role, catalyzes the hydroxylation of 2-nonaprenyl-3-methyl-6-methoxy-1,4-benzoquinol during ubiquinone biosynthesis. This Francisella tularensis subsp. novicida (strain U112) protein is 3-demethoxyubiquinol 3-hydroxylase.